A 142-amino-acid polypeptide reads, in one-letter code: Small ribosomal subunit protein uS12 (142 aa).

Positions 1 to 30 (MGKTRGMGAARKLKNHRRRQRWADKSYKKS) are disordered. Residues 11-20 (RKLKNHRRRQ) show a composition bias toward basic residues. A compositionally biased stretch (basic and acidic residues) spans 21–30 (RWADKSYKKS). Position 61 is a hydroxyproline (P61).

It belongs to the universal ribosomal protein uS12 family.

In Fragaria ananassa (Strawberry), this protein is Small ribosomal subunit protein uS12 (RPS23).